We begin with the raw amino-acid sequence, 323 residues long: Arginase-1 (323 aa).

Positions 1 to 27 (MSSKPKPIEIIGAPFSKGQPRGGVEKG) are disordered. Lys-17 bears the N6-succinyllysine mark. Ser-62 and Ser-72 each carry phosphoserine. Position 75 is an N6-succinyllysine (Lys-75). Residues His-101, Asp-124, His-126, and Asp-128 each coordinate Mn(2+). Residues 126-130 (HTDIN) and 137-139 (SGN) contribute to the substrate site. A Phosphoserine modification is found at Ser-163. Substrate is bound at residue Asp-183. Phosphoserine is present on Ser-217. Mn(2+) contacts are provided by Asp-232 and Asp-234. The substrate site is built by Thr-246 and Glu-277. At Thr-281 the chain carries Phosphothreonine.

It belongs to the arginase family. As to quaternary structure, homotrimer. Interacts with CMTM6. Mn(2+) is required as a cofactor. As to expression, detected in liver (at protein level).

The protein resides in the cytoplasm. The protein localises to the cytoplasmic granule. It carries out the reaction L-arginine + H2O = urea + L-ornithine. It functions in the pathway nitrogen metabolism; urea cycle; L-ornithine and urea from L-arginine: step 1/1. With respect to regulation, inactivated by diethyl pyrocarbonate (DEPC). Key element of the urea cycle converting L-arginine to urea and L-ornithine, which is further metabolized into metabolites proline and polyamides that drive collagen synthesis and bioenergetic pathways critical for cell proliferation, respectively; the urea cycle takes place primarily in the liver and, to a lesser extent, in the kidneys. In terms of biological role, functions in L-arginine homeostasis in nonhepatic tissues characterized by the competition between nitric oxide synthase (NOS) and arginase for the available intracellular substrate arginine. Arginine metabolism is a critical regulator of innate and adaptive immune responses. Involved in an antimicrobial effector pathway in polymorphonuclear granulocytes (PMN). Upon PMN cell death is liberated from the phagolysosome and depletes arginine in the microenvironment leading to suppressed T cell and natural killer (NK) cell proliferation and cytokine secretion. In group 2 innate lymphoid cells (ILC2s) promotes acute type 2 inflammation in the lung and is involved in optimal ILC2 proliferation but not survival. Plays a role in the immune response of alternatively activated or M2 macrophages in processes such as wound healing and tissue regeneration, immune defense against multicellular pathogens and parasites, and immune suppression and allergic inflammation; the regulatory outcome seems to be organ specific. In tumor-infiltrating dendritic cells (DCs) and myeloid-derived suppressor cells (MDSCs) plays a role in suppression of T cell-mediated antitumor immunity. This chain is Arginase-1 (Arg1), found in Rattus norvegicus (Rat).